A 176-amino-acid chain; its full sequence is Superoxide oxidase CybB (176 aa).

Over 1 to 7 (MENKYSR) the chain is Cytoplasmic. Residues 8-29 (LQISIHWLVFLLVIAAYCAMEF) traverse the membrane as a helical segment. Histidine 13 is a heme b binding site. The Periplasmic segment spans residues 30 to 39 (RGFFPRSDRP). Residues 40-64 (LINMIHVSCGISILVLMVVRLLLRL) traverse the membrane as a helical segment. Position 45 (histidine 45) interacts with heme b. Residues 65–77 (KYPTPPIIPKPKP) are Cytoplasmic-facing. The helical transmembrane segment at 78 to 103 (MMTGLAHLGHLVIYLLFIALPVIGLV) threads the bilayer. The Periplasmic portion of the chain corresponds to 104 to 135 (MMYNRGNPWFAFGLTMPYASEANFERVDSLKS). A helical transmembrane segment spans residues 136–158 (WHETLANLGYFVIGLHAAAALAH). Heme b-binding residues include histidine 137 and histidine 151. The Cytoplasmic portion of the chain corresponds to 159 to 176 (HYFWKDNTLLRMMPRKRS).

It belongs to the cytochrome b561 family. In terms of assembly, monomer. Requires heme b as cofactor.

The protein localises to the cell inner membrane. It carries out the reaction a ubiquinol + 2 O2 = 2 superoxide + a ubiquinone + 2 H(+). The catalysed reaction is a menaquinol + 2 O2 = 2 superoxide + a menaquinone + 2 H(+). With respect to regulation, quinone binding to the enzyme accelerates the reaction with superoxide. Its function is as follows. B-type di-heme cytochrome. Catalyzes the oxidation of superoxide to molecular oxygen and transfers the extracted electrons to ubiquinone through the two hemes. Can also use menaquinone. The enzyme may be responsible for the detoxification of the superoxide anion produced in the membrane or at its surface. However, it can also efficiently catalyze the formation of superoxide from ubiquinol under physiological conditions. This is Superoxide oxidase CybB from Escherichia coli (strain K12).